The following is a 55-amino-acid chain: Large ribosomal subunit protein bL33 (55 aa).

This sequence belongs to the bacterial ribosomal protein bL33 family.

The sequence is that of Large ribosomal subunit protein bL33 from Escherichia coli (strain K12 / DH10B).